The primary structure comprises 201 residues: Adenylyl-sulfate kinase (201 aa).

35–42 is a binding site for ATP; it reads GLSGSGKS. Ser109 acts as the Phosphoserine intermediate in catalysis.

This sequence belongs to the APS kinase family.

The enzyme catalyses adenosine 5'-phosphosulfate + ATP = 3'-phosphoadenylyl sulfate + ADP + H(+). Its pathway is sulfur metabolism; hydrogen sulfide biosynthesis; sulfite from sulfate: step 2/3. Catalyzes the synthesis of activated sulfate. In Salmonella paratyphi C (strain RKS4594), this protein is Adenylyl-sulfate kinase.